Reading from the N-terminus, the 189-residue chain is dTTP/UTP pyrophosphatase (189 aa).

The Proton acceptor role is filled by Asp73.

It belongs to the Maf family. YhdE subfamily. A divalent metal cation is required as a cofactor.

It is found in the cytoplasm. The enzyme catalyses dTTP + H2O = dTMP + diphosphate + H(+). It carries out the reaction UTP + H2O = UMP + diphosphate + H(+). In terms of biological role, nucleoside triphosphate pyrophosphatase that hydrolyzes dTTP and UTP. May have a dual role in cell division arrest and in preventing the incorporation of modified nucleotides into cellular nucleic acids. This is dTTP/UTP pyrophosphatase from Vibrio parahaemolyticus serotype O3:K6 (strain RIMD 2210633).